The following is a 121-amino-acid chain: Large ribosomal subunit protein bL12 (121 aa).

It belongs to the bacterial ribosomal protein bL12 family. Homodimer. Part of the ribosomal stalk of the 50S ribosomal subunit. Forms a multimeric L10(L12)X complex, where L10 forms an elongated spine to which 2 to 4 L12 dimers bind in a sequential fashion. Binds GTP-bound translation factors.

Forms part of the ribosomal stalk which helps the ribosome interact with GTP-bound translation factors. Is thus essential for accurate translation. The chain is Large ribosomal subunit protein bL12 from Enterobacter sp. (strain 638).